The primary structure comprises 308 residues: Ornithine carbamoyltransferase (308 aa).

Carbamoyl phosphate-binding positions include 51–54 (STRT), glutamine 78, arginine 102, and 129–132 (HPTQ). L-ornithine is bound by residues asparagine 160, aspartate 224, and 228–229 (SM). Carbamoyl phosphate-binding positions include 264–265 (CL) and arginine 292.

It belongs to the aspartate/ornithine carbamoyltransferase superfamily. OTCase family.

It localises to the cytoplasm. The enzyme catalyses carbamoyl phosphate + L-ornithine = L-citrulline + phosphate + H(+). The protein operates within amino-acid biosynthesis; L-arginine biosynthesis; L-arginine from L-ornithine and carbamoyl phosphate: step 1/3. Reversibly catalyzes the transfer of the carbamoyl group from carbamoyl phosphate (CP) to the N(epsilon) atom of ornithine (ORN) to produce L-citrulline. The polypeptide is Ornithine carbamoyltransferase (Caldicellulosiruptor saccharolyticus (strain ATCC 43494 / DSM 8903 / Tp8T 6331)).